The primary structure comprises 485 residues: Zinc finger protein 577 (485 aa).

The tract at residues 1-21 (MKNATIVMSVRREQGSSSGEG) is disordered. Positions 23–94 (LSFEDVAVGF…EGAAHSQICP (72 aa)) constitute a KRAB domain. The C2H2-type 1; degenerate zinc-finger motif lies at 158–180 (HECSVCGRAFSRKAQLIQHQRTE). 7 consecutive C2H2-type zinc fingers follow at residues 186-208 (HGCG…QRTH), 214-236 (HECS…QRTH), 242-264 (YRCS…QRSH), 270-292 (YGCS…QRLH), 298-320 (YKCS…QRIH), 326-348 (YECS…QRTH), and 354-376 (YSCR…EKTH).

This sequence belongs to the krueppel C2H2-type zinc-finger protein family.

The protein resides in the nucleus. Functionally, may be involved in transcriptional regulation. The protein is Zinc finger protein 577 (ZNF577) of Homo sapiens (Human).